Reading from the N-terminus, the 59-residue chain is uncharacterized protein (59 aa).

This is an uncharacterized protein from Acidianus convivator (ATV).